Here is a 385-residue protein sequence, read N- to C-terminus: Probable caffeine synthase MTL2 (385 aa).

8 residues coordinate S-adenosyl-L-homocysteine: tyrosine 18, cysteine 62, asparagine 67, aspartate 101, leucine 102, serine 140, phenylalanine 141, and cysteine 157. Residues tyrosine 158, histidine 161, and tryptophan 162 each contribute to the caffeine site. Asparagine 179 is a Mg(2+) binding site. Position 238 (threonine 238) interacts with caffeine. Mg(2+) is bound by residues aspartate 261, phenylalanine 263, and asparagine 264. Tyrosine 369 is a binding site for caffeine.

The protein belongs to the methyltransferase superfamily. Type-7 methyltransferase family. Mg(2+) serves as cofactor.

Its pathway is alkaloid biosynthesis. Functionally, may be involved in the biosynthesis of caffeine. In Coffea canephora (Robusta coffee), this protein is Probable caffeine synthase MTL2.